A 178-amino-acid chain; its full sequence is Large ribosomal subunit protein uL6 (178 aa).

This sequence belongs to the universal ribosomal protein uL6 family. As to quaternary structure, part of the 50S ribosomal subunit.

Its function is as follows. This protein binds to the 23S rRNA, and is important in its secondary structure. It is located near the subunit interface in the base of the L7/L12 stalk, and near the tRNA binding site of the peptidyltransferase center. In Francisella tularensis subsp. mediasiatica (strain FSC147), this protein is Large ribosomal subunit protein uL6.